The sequence spans 425 residues: Serine/threonine-protein kinase VRK1 (425 aa).

Residues 38–329 (WKLGSAVGQG…KLRGILQQGL (292 aa)) form the Protein kinase domain. ATP contacts are provided by residues 44–52 (VGQGGFGLL) and Lys72. Residue Asp178 is the Proton acceptor of the active site. The interval 343–425 (GVATNSTSLP…KSRGRPKKNS (83 aa)) is disordered. Positions 415 to 425 (KKSRGRPKKNS) are enriched in basic residues.

Belongs to the protein kinase superfamily. CK1 Ser/Thr protein kinase family. VRK subfamily.

Its subcellular location is the nucleus. The protein resides in the cytoplasm. The protein localises to the cajal body. The enzyme catalyses L-seryl-[protein] + ATP = O-phospho-L-seryl-[protein] + ADP + H(+). It catalyses the reaction L-threonyl-[protein] + ATP = O-phospho-L-threonyl-[protein] + ADP + H(+). In terms of biological role, serine/threonine kinase involved in the regulation of key cellular processes including the cell cycle, nuclear condensation, transcription regulation, and DNA damage response. Controls chromatin organization and remodeling by mediating phosphorylation of histone H3 on 'Thr-4' and histone H2AX (H2aXT4ph). It also phosphorylates KAT5 in response to DNA damage, promoting KAT5 association with chromatin and histone acetyltransferase activity. Is involved in the regulation of cell cycle progression of neural progenitors, and is required for proper cortical neuronal migration. Is involved in neurite elongation and branching in motor neurons, and has an essential role in Cajal bodies assembly, acting through COIL phosphorylation and the control of coilin degradation. Involved in Golgi disassembly during the cell cycle: following phosphorylation by PLK3 during mitosis, it is required to induce Golgi fragmentation. Phosphorylates BANF1: disrupts its ability to bind DNA, reduces its binding to LEM domain-containing proteins and causes its relocalization from the nucleus to the cytoplasm. Phosphorylates TP53BP1 and p53/TP53 on 'Thr-18', preventing the interaction between p53/TP53 and MDM2. Phosphorylates ATF2 which activates its transcriptional activity. Phosphorylates JUN. In Danio rerio (Zebrafish), this protein is Serine/threonine-protein kinase VRK1 (vrk1).